Reading from the N-terminus, the 742-residue chain is MEHTYQYAWIIPLLPLPVTMSIGFGLLLIPTATKSIRRMWAFPSVLLLSIGLIFSANLAFQQINGSFIYQYLWSWTINNDFSLEFGYFIDPLTSVMLILITTVGIMVLIYSDNYMSHDQGYLRFFAYMSFFNASMLGLVTSSNLIQIYIFWELVGMCSYLLIGFWFTRPSAASACQKAFITNRVGDFGLLLGILGFYWITGSFEFRDLFETFNKLNNEGNSLFPTLCAFLLFLGAIAKSAQFPLHVWLPDAMEGPTPISALIHAATMVAAGIFLVARLLPLFTGIPYIMNIISLIGVITLLLGATLALAQRDIKRSLAYSTMSQLGYIMLALGLGSYRAALFHLITHAYSKALLFLGSGSIIHSMEPLVGYSPDKSQNMVLMGGLTRYIPITRTTFLLGTLSLCGIPPLACFWSKDEILSESWLYSPSFAVIAYFTAGLTAFYMFRVYLLTFEGSLHVNFQNYSGTQNTSAYSISLWGKEEPKSVNSLFSTMKTNNETKNILFFEKNIYQFNENVINQMRDFTTPFLRKNTSMYPHESDNTMLYPLLILVVFTLFVGFIGIPLVQGEGEIDLNLLSKWLAPSKNLLYPNSEDSIDLYDFFINASFSVSIATGGIFLAFIFYGSPYSPLQNLDLMNLLVKIGTKTKRVSLDKIANIVYNWSHNRGYIDIFYTNVVTQSIRELAKLTQFFDRYIIDGITNSVGVLSFFAGEAIKYLVGGGRISFYLFFYLFFILIFVYFLFLSL.

16 consecutive transmembrane segments (helical) span residues 9-29 (WIIP…LLLI), 40-60 (WAFP…NLAF), 89-109 (IDPL…MVLI), 125-145 (FAYM…SNLI), 147-167 (IYIF…FWFT), 185-205 (GDFG…SFEF), 228-248 (AFLL…HVWL), 256-276 (TPIS…FLVA), 288-308 (IMNI…TLAL), 325-345 (LGYI…FHLI), 352-372 (ALLF…VGYS), 394-414 (TTFL…CFWS), 423-443 (WLYS…TAFY), 544-564 (YPLL…IPLV), 599-619 (FFIN…LAFI), and 720-740 (ISFY…FLFL).

This sequence belongs to the complex I subunit 5 family. In terms of assembly, NDH is composed of at least 16 different subunits, 5 of which are encoded in the nucleus.

It localises to the plastid. It is found in the chloroplast thylakoid membrane. It catalyses the reaction a plastoquinone + NADH + (n+1) H(+)(in) = a plastoquinol + NAD(+) + n H(+)(out). It carries out the reaction a plastoquinone + NADPH + (n+1) H(+)(in) = a plastoquinol + NADP(+) + n H(+)(out). Its function is as follows. NDH shuttles electrons from NAD(P)H:plastoquinone, via FMN and iron-sulfur (Fe-S) centers, to quinones in the photosynthetic chain and possibly in a chloroplast respiratory chain. The immediate electron acceptor for the enzyme in this species is believed to be plastoquinone. Couples the redox reaction to proton translocation, and thus conserves the redox energy in a proton gradient. The sequence is that of NAD(P)H-quinone oxidoreductase subunit 5, chloroplastic (ndhF) from Lemna minor (Common duckweed).